Consider the following 126-residue polypeptide: Protein HEAT-INDUCED TAS1 TARGET 3 (126 aa).

This sequence belongs to the heat induced plant HTT protein family. As to expression, expressed in seedlings, leaves, stems, inflorescences and siliques.

It localises to the cytoplasm. The protein resides in the nucleus. Its function is as follows. Mediates both basal and acquired thermotolerance. This chain is Protein HEAT-INDUCED TAS1 TARGET 3, found in Arabidopsis thaliana (Mouse-ear cress).